Reading from the N-terminus, the 751-residue chain is Catalase-peroxidase (751 aa).

Residues 1–24 form a disordered region; the sequence is MADKCPFHNQAPKPNVAGSGTQNR. A cross-link (tryptophyl-tyrosyl-methioninium (Trp-Tyr) (with M-267)) is located at residues 95–241; it reads WHSAGTYRTF…LAAAHMGLIY (147 aa). His96 functions as the Proton acceptor in the catalytic mechanism. Positions 241 to 267 form a cross-link, tryptophyl-tyrosyl-methioninium (Tyr-Met) (with W-95); the sequence is YVNPEGPDGNPDPVAAARDIRTTFARM. His282 is a binding site for heme b.

It belongs to the peroxidase family. Peroxidase/catalase subfamily. In terms of assembly, homodimer or homotetramer. Heme b serves as cofactor. Formation of the three residue Trp-Tyr-Met cross-link is important for the catalase, but not the peroxidase activity of the enzyme.

Its subcellular location is the cytoplasm. The enzyme catalyses H2O2 + AH2 = A + 2 H2O. It catalyses the reaction 2 H2O2 = O2 + 2 H2O. Functionally, bifunctional enzyme with both catalase and broad-spectrum peroxidase activity. The protein is Catalase-peroxidase of Aspergillus oryzae (strain ATCC 42149 / RIB 40) (Yellow koji mold).